Consider the following 504-residue polypeptide: MEEFQGYLELDRFRQHDFLYPLIFREYIYALAHDHGLNRVILLENVTYDNKSSLLIVKRLITRMYQQNHLMISANDSNQNKFLGYNKNLYSQIISEGFAIIAEIPFSLRLIFSLEGSQIVRSYNLRSIHSIFPFLEDKFPHLNYVADVLIPYPIHLEILVQTLRYRVKDASSLHLLRFFLHEYSNGNILIILNKSISIFSKSNSRLLLFLYNSYICEYESVFLFLRNQSNHLRLTSSGVLFERIYLHRKMEDLVEVFVNDFQGILCFLKDPFIHYVRYQGKSILASKDTPLLMNKWKYYLVSLWQCHFFVWSRPGRIYINQLSKHSLDFLGYFSSVPLNPSMVRSQMLENSFIINNAPKKLDTIVTIIPLIGSLAKAKFCNALGHPISKPTWADLSDFDIINRFVRICKNLSHYYSGSSKKKGMYRIKYILRLSCVKTLARKHKSTIRAFLKRLGSELFEEFFTEEEEFLSLIFPRTSFTLRRLYRGRVWYLDIICMNGLANHE.

Belongs to the intron maturase 2 family. MatK subfamily.

It is found in the plastid. The protein localises to the chloroplast. In terms of biological role, usually encoded in the trnK tRNA gene intron. Probably assists in splicing its own and other chloroplast group II introns. This Betula papyrifera (Paper birch) protein is Maturase K.